The primary structure comprises 417 residues: Serine hydroxymethyltransferase (417 aa).

(6S)-5,6,7,8-tetrahydrofolate-binding positions include Leu-121 and 125 to 127; that span reads GHL. Residue Lys-229 is modified to N6-(pyridoxal phosphate)lysine. Residue 355–357 participates in (6S)-5,6,7,8-tetrahydrofolate binding; it reads SPF.

Belongs to the SHMT family. As to quaternary structure, homodimer. Requires pyridoxal 5'-phosphate as cofactor.

The protein resides in the cytoplasm. The enzyme catalyses (6R)-5,10-methylene-5,6,7,8-tetrahydrofolate + glycine + H2O = (6S)-5,6,7,8-tetrahydrofolate + L-serine. Its pathway is one-carbon metabolism; tetrahydrofolate interconversion. It functions in the pathway amino-acid biosynthesis; glycine biosynthesis; glycine from L-serine: step 1/1. Functionally, catalyzes the reversible interconversion of serine and glycine with tetrahydrofolate (THF) serving as the one-carbon carrier. This reaction serves as the major source of one-carbon groups required for the biosynthesis of purines, thymidylate, methionine, and other important biomolecules. Also exhibits THF-independent aldolase activity toward beta-hydroxyamino acids, producing glycine and aldehydes, via a retro-aldol mechanism. The protein is Serine hydroxymethyltransferase of Klebsiella pneumoniae (strain 342).